The chain runs to 294 residues: Homeobox protein HD1 (294 aa).

Residues 197-217 form the ELK domain; it reads ELKLELKQGFKSRIEDVREEI. The homeobox; TALE-type DNA-binding region spans 218–281; it reads MRKRRAGKLP…NQRKRNWHNN (64 aa).

This sequence belongs to the TALE/KNOX homeobox family. As to expression, in roots, stems and cotyledons of one-week old seedlings. In mature plants, in young leaves from first level below flowers as well as in flower buds and open flowers.

It is found in the nucleus. Its function is as follows. Possible developmental regulator. The protein is Homeobox protein HD1 (HD1) of Brassica napus (Rape).